The chain runs to 103 residues: Small ribosomal subunit protein uS10 (103 aa).

The protein belongs to the universal ribosomal protein uS10 family. As to quaternary structure, part of the 30S ribosomal subunit.

In terms of biological role, involved in the binding of tRNA to the ribosomes. The protein is Small ribosomal subunit protein uS10 of Pelodictyon phaeoclathratiforme (strain DSM 5477 / BU-1).